Reading from the N-terminus, the 305-residue chain is UDP-3-O-acyl-N-acetylglucosamine deacetylase (305 aa).

Positions 79, 238, and 242 each coordinate Zn(2+). The active-site Proton donor is His265.

The protein belongs to the LpxC family. It depends on Zn(2+) as a cofactor.

It catalyses the reaction a UDP-3-O-[(3R)-3-hydroxyacyl]-N-acetyl-alpha-D-glucosamine + H2O = a UDP-3-O-[(3R)-3-hydroxyacyl]-alpha-D-glucosamine + acetate. The protein operates within glycolipid biosynthesis; lipid IV(A) biosynthesis; lipid IV(A) from (3R)-3-hydroxytetradecanoyl-[acyl-carrier-protein] and UDP-N-acetyl-alpha-D-glucosamine: step 2/6. Its function is as follows. Catalyzes the hydrolysis of UDP-3-O-myristoyl-N-acetylglucosamine to form UDP-3-O-myristoylglucosamine and acetate, the committed step in lipid A biosynthesis. This chain is UDP-3-O-acyl-N-acetylglucosamine deacetylase, found in Vibrio atlanticus (strain LGP32) (Vibrio splendidus (strain Mel32)).